Consider the following 231-residue polypeptide: CLAVATA3/ESR (CLE)-related protein 4B-2 (231 aa).

An N-terminal signal peptide occupies residues 1-21; the sequence is MATNTMLCLLILSVVLALAFA. Positions 21 to 83 are required for secretion from the host cytoplasm to the host apoplasm; that stretch reads ATNKKGDEEP…SNQLPNNNWM (63 aa). N-linked (GlcNAc...) asparagine glycosylation occurs at Asn32. The interval 116–231 is disordered; that stretch reads RKTGMHSQRH…APAGPDPIHH (116 aa). Basic and acidic residues-rich tracts occupy residues 125–137 and 144–221; these read HHEE…EKRV and PIHH…EKRG. The stretch at 127–135 is one A-1 repeat; sequence EETTLEQEK. The 5 X approximate repeat A stretch occupies residues 127–219; sequence EETTLEQEKR…HEETTFEQEK (93 aa). The stretch at 136–147 is one CLE-1 repeat; the sequence is RVAGAGPDPIHH. The tract at residues 136-231 is 5 X approximate repeat CLE; the sequence is RVAGAGPDPI…APAGPDPIHH (96 aa). One copy of the A-2 repeat lies at 148 to 156; it reads EETTLEQEK. One copy of the CLE-2 repeat lies at 157 to 168; it reads RAVPAGPDPKHH. One copy of the A-3 repeat lies at 169–177; the sequence is EETTLEQEK. The CLE-3 repeat unit spans residues 178–189; the sequence is RAVPAGPDPKHH. Residues 190 to 198 form an A-4 repeat; sequence EETTLEQEK. The stretch at 199–210 is one CLE-4 repeat; it reads RAVPAGPDPKHH. One copy of the A-5 repeat lies at 211–219; that stretch reads EETTFEQEK. Residues 220–231 form a CLE-5 repeat; that stretch reads RGAPAGPDPIHH.

Belongs to the CLV3/ESR signal peptide family. Highly expressed exclusively within the dorsal esophageal gland cell during syncytium formation in host plants.

It is found in the secreted. It localises to the host cytoplasm. The protein localises to the host extracellular space. The protein resides in the extracellular space. Its subcellular location is the apoplast. Mimics host plant CLE extracellular signal peptides that regulate cell fate. May play a role in the differentiation or division of feeding cells (syncytia) induced in plant roots during infection. This is CLAVATA3/ESR (CLE)-related protein 4B-2 (CLE-4B-2) from Globodera rostochiensis (Golden nematode worm).